The primary structure comprises 373 residues: Core trichothecene cluster (CTC) protein 14 (373 aa).

The protein belongs to the TRI14 family.

Its function is as follows. Part of the core gene cluster that mediates the biosynthesis of trichothecenes, a very large family of chemically related bicyclic sesquiterpene compounds acting as mycotoxins, including T2-toxin. The biosynthesis of trichothecenes begins with the cyclization of farnesyl diphosphate to trichodiene and is catalyzed by the trichodiene synthase TRI5. Trichodiene undergoes a series of oxygenations catalyzed by the cytochrome P450 monooxygenase TRI4. TRI4 controls the addition of four oxygens at C-2, C-3, C-11, and the C-12, C-13-epoxide to form the intermediate isotrichotriol. Isotrichotriol then undergoes a non-enzymatic isomerization and cyclization to form isotrichodermol. During this process, the oxygen at the C-2 position becomes the pyran ring oxygen and the hydroxyl group at C-11 is lost. More complex type A trichothecenes are built by modifying isotrichodermol through a series of paired hydroxylation and acetylation or acylation steps. Isotrichodermol is converted to isotrichodermin by the acetyltransferase TRI101. TRI101 encodes a C-3 transacetylase that acts as a self-protection or resistance factor during biosynthesis and that the presence of a free C-3 hydroxyl group is a key component of Fusarium trichothecene phytotoxicity. A second hydroxyl group is added to C-15 by the trichothecene C-15 hydroxylase TRI11, producing 15-decalonectrin, which is then acetylated by TRI3, producing calonectrin. A third hydroxyl group is added at C-4 by the cytochrome P450 monooxygenase TRI13, converting calonectrin to 3,15-diacetoxyspirpenol, which is subsequently acetylated bythe acetyltransferase TRI7. A fourth hydroxyl group is added to C-8 by the cytochrome P450 monooxygenase TRI1, followed by the addition of an isovaleryl moiety by TRI16. Finally, the acetyl group is removed from the C-3 position by the trichothecene C-3 esterase TRI8 to produce T-2 toxin. This chain is Core trichothecene cluster (CTC) protein 14, found in Fusarium sporotrichioides.